The following is a 306-amino-acid chain: Pantothenate kinase (306 aa).

ATP is bound at residue 91–98 (GSVAVGKS).

The protein belongs to the prokaryotic pantothenate kinase family.

It localises to the cytoplasm. The enzyme catalyses (R)-pantothenate + ATP = (R)-4'-phosphopantothenate + ADP + H(+). Its pathway is cofactor biosynthesis; coenzyme A biosynthesis; CoA from (R)-pantothenate: step 1/5. This is Pantothenate kinase from Streptococcus mutans serotype c (strain ATCC 700610 / UA159).